The sequence spans 32 residues: Cytochrome b6-f complex subunit 8 (32 aa).

The chain crosses the membrane as a helical span at residues 6–26 (IVGITWAALMVVFTFSLSLVV).

Belongs to the PetN family. The 4 large subunits of the cytochrome b6-f complex are cytochrome b6, subunit IV (17 kDa polypeptide, PetD), cytochrome f and the Rieske protein, while the 4 small subunits are PetG, PetL, PetM and PetN. The complex functions as a dimer.

Its subcellular location is the plastid. It is found in the chloroplast thylakoid membrane. Its function is as follows. Component of the cytochrome b6-f complex, which mediates electron transfer between photosystem II (PSII) and photosystem I (PSI), cyclic electron flow around PSI, and state transitions. This Pinus koraiensis (Korean pine) protein is Cytochrome b6-f complex subunit 8.